The chain runs to 430 residues: Enolase (430 aa).

(2R)-2-phosphoglycerate is bound at residue glutamine 167. Glutamate 209 acts as the Proton donor in catalysis. Residues aspartate 245, glutamate 286, and aspartate 313 each contribute to the Mg(2+) site. The (2R)-2-phosphoglycerate site is built by lysine 338, arginine 367, serine 368, and lysine 389. The active-site Proton acceptor is lysine 338.

It belongs to the enolase family. Mg(2+) is required as a cofactor.

The protein localises to the cytoplasm. It localises to the secreted. It is found in the cell surface. The catalysed reaction is (2R)-2-phosphoglycerate = phosphoenolpyruvate + H2O. It functions in the pathway carbohydrate degradation; glycolysis; pyruvate from D-glyceraldehyde 3-phosphate: step 4/5. In terms of biological role, catalyzes the reversible conversion of 2-phosphoglycerate (2-PG) into phosphoenolpyruvate (PEP). It is essential for the degradation of carbohydrates via glycolysis. The sequence is that of Enolase from Synechococcus sp. (strain CC9902).